The following is an 82-amino-acid chain: Putative defensin-like protein 191 (82 aa).

Positions 1–28 are cleaved as a signal peptide; the sequence is MAKSVNATGFITYMVIFLILTGISRVKA. Intrachain disulfides connect cysteine 33-cysteine 79, cysteine 46-cysteine 65, cysteine 51-cysteine 74, and cysteine 55-cysteine 76.

Belongs to the DEFL family.

Its subcellular location is the secreted. This is Putative defensin-like protein 191 from Arabidopsis thaliana (Mouse-ear cress).